The chain runs to 212 residues: Pyridoxine/pyridoxamine 5'-phosphate oxidase (212 aa).

Residues arginine 8 to tyrosine 11 and lysine 66 each bind substrate. FMN contacts are provided by residues arginine 61–lysine 66, phenylalanine 76–threonine 77, arginine 82, lysine 83, and glutamine 105. Substrate contacts are provided by tyrosine 123, arginine 127, and serine 131. FMN-binding positions include glutamine 140–serine 141 and tryptophan 185. Arginine 191–histidine 193 is a substrate binding site. Position 195 (arginine 195) interacts with FMN.

This sequence belongs to the pyridoxamine 5'-phosphate oxidase family. In terms of assembly, homodimer. The cofactor is FMN.

The catalysed reaction is pyridoxamine 5'-phosphate + O2 + H2O = pyridoxal 5'-phosphate + H2O2 + NH4(+). It carries out the reaction pyridoxine 5'-phosphate + O2 = pyridoxal 5'-phosphate + H2O2. The protein operates within cofactor metabolism; pyridoxal 5'-phosphate salvage; pyridoxal 5'-phosphate from pyridoxamine 5'-phosphate: step 1/1. Its pathway is cofactor metabolism; pyridoxal 5'-phosphate salvage; pyridoxal 5'-phosphate from pyridoxine 5'-phosphate: step 1/1. Functionally, catalyzes the oxidation of either pyridoxine 5'-phosphate (PNP) or pyridoxamine 5'-phosphate (PMP) into pyridoxal 5'-phosphate (PLP). This Shewanella denitrificans (strain OS217 / ATCC BAA-1090 / DSM 15013) protein is Pyridoxine/pyridoxamine 5'-phosphate oxidase.